The following is a 278-amino-acid chain: 3-methyl-2-oxobutanoate hydroxymethyltransferase (278 aa).

Residues Asp-52 and Asp-91 each coordinate Mg(2+). Residues 52 to 53, Asp-91, and Lys-121 contribute to the 3-methyl-2-oxobutanoate site; that span reads DS. Residue Glu-123 coordinates Mg(2+). Glu-190 acts as the Proton acceptor in catalysis.

This sequence belongs to the PanB family. Homodecamer; pentamer of dimers. Mg(2+) is required as a cofactor.

The protein localises to the cytoplasm. The catalysed reaction is 3-methyl-2-oxobutanoate + (6R)-5,10-methylene-5,6,7,8-tetrahydrofolate + H2O = 2-dehydropantoate + (6S)-5,6,7,8-tetrahydrofolate. Its pathway is cofactor biosynthesis; (R)-pantothenate biosynthesis; (R)-pantoate from 3-methyl-2-oxobutanoate: step 1/2. Functionally, catalyzes the reversible reaction in which hydroxymethyl group from 5,10-methylenetetrahydrofolate is transferred onto alpha-ketoisovalerate to form ketopantoate. This Rhodospirillum rubrum (strain ATCC 11170 / ATH 1.1.1 / DSM 467 / LMG 4362 / NCIMB 8255 / S1) protein is 3-methyl-2-oxobutanoate hydroxymethyltransferase.